A 239-amino-acid chain; its full sequence is Peptidyl-tRNA hydrolase (239 aa).

Residue Tyr-14 participates in tRNA binding. His-19 acts as the Proton acceptor in catalysis. 3 residues coordinate tRNA: Phe-64, Asn-66, and Asn-112. Positions 199–227 (EKPAQKGRSHIRQARPKAPPAELPSSGPM) are disordered. A compositionally biased stretch (basic residues) spans 203 to 213 (QKGRSHIRQAR).

This sequence belongs to the PTH family. As to quaternary structure, monomer.

It localises to the cytoplasm. The enzyme catalyses an N-acyl-L-alpha-aminoacyl-tRNA + H2O = an N-acyl-L-amino acid + a tRNA + H(+). In terms of biological role, hydrolyzes ribosome-free peptidyl-tRNAs (with 1 or more amino acids incorporated), which drop off the ribosome during protein synthesis, or as a result of ribosome stalling. Catalyzes the release of premature peptidyl moieties from peptidyl-tRNA molecules trapped in stalled 50S ribosomal subunits, and thus maintains levels of free tRNAs and 50S ribosomes. This Chelativorans sp. (strain BNC1) protein is Peptidyl-tRNA hydrolase.